A 283-amino-acid chain; its full sequence is Pantothenate synthetase (283 aa).

30–37 (MGYLHEGH) is a binding site for ATP. The active-site Proton donor is His-37. Gln-61 serves as a coordination point for (R)-pantoate. Gln-61 lines the beta-alanine pocket. 147–150 (GRKD) serves as a coordination point for ATP. Gln-153 contacts (R)-pantoate. ATP contacts are provided by residues Val-176 and 184-187 (MSSR).

This sequence belongs to the pantothenate synthetase family. In terms of assembly, homodimer.

It is found in the cytoplasm. It carries out the reaction (R)-pantoate + beta-alanine + ATP = (R)-pantothenate + AMP + diphosphate + H(+). The protein operates within cofactor biosynthesis; (R)-pantothenate biosynthesis; (R)-pantothenate from (R)-pantoate and beta-alanine: step 1/1. Its function is as follows. Catalyzes the condensation of pantoate with beta-alanine in an ATP-dependent reaction via a pantoyl-adenylate intermediate. The chain is Pantothenate synthetase from Syntrophotalea carbinolica (strain DSM 2380 / NBRC 103641 / GraBd1) (Pelobacter carbinolicus).